The primary structure comprises 496 residues: Cytochrome P450 71B1 (496 aa).

Cysteine 436 is a binding site for heme.

The protein belongs to the cytochrome P450 family. Heme serves as cofactor.

The protein is Cytochrome P450 71B1 (CYP71B1) of Thlaspi arvense (Field penny-cress).